We begin with the raw amino-acid sequence, 215 residues long: Interleukin-12 subunit alpha (215 aa).

The signal sequence occupies residues 1–22 (MCQSRYLLFLATLALLNHLSLA). 3 disulfides stabilise this stretch: cysteine 33–cysteine 106, cysteine 60–cysteine 192, and cysteine 81–cysteine 119. Asparagine 89 is a glycosylation site (N-linked (GlcNAc...) asparagine).

This sequence belongs to the IL-6 superfamily. In terms of assembly, heterodimer with IL12B; disulfide-linked. This heterodimer is known as interleukin IL-12. Heterodimer with EBI3/IL27B; not disulfide-linked. This heterodimer is known as interleukin IL-35. Interacts with NBR1; this interaction promotes IL-12 secretion.

Its subcellular location is the secreted. Functionally, heterodimerizes with IL12B to form the IL-12 cytokine or with EBI3/IL27B to form the IL-35 cytokine. IL-12 is primarily produced by professional antigen-presenting cells (APCs) such as B-cells and dendritic cells (DCs) as well as macrophages and granulocytes and regulates T-cell and natural killer-cell responses, induces the production of interferon-gamma (IFN-gamma), favors the differentiation of T-helper 1 (Th1) cells and is an important link between innate resistance and adaptive immunity. Mechanistically, exerts its biological effects through a receptor composed of IL12R1 and IL12R2 subunits. Binding to the receptor results in the rapid tyrosine phosphorylation of a number of cellular substrates including the JAK family kinases TYK2 and JAK2. In turn, recruited STAT4 gets phosphorylated and translocates to the nucleus where it regulates cytokine/growth factor responsive genes. As part of IL-35, plays essential roles in maintaining the immune homeostasis of the liver microenvironment and also functions as an immune-suppressive cytokine. Mediates biological events through unconventional receptors composed of IL12RB2 and gp130/IL6ST heterodimers or homodimers. Signaling requires the transcription factors STAT1 and STAT4, which form a unique heterodimer that binds to distinct DNA sites. The polypeptide is Interleukin-12 subunit alpha (Il12a) (Mus musculus (Mouse)).